A 428-amino-acid polypeptide reads, in one-letter code: MKIELICTGSELLTGKVNTNAAYIGSRLSAIGFEISLVTDVGDKKQDLLREFKRAFKRSNIVITTGGLGPTFDDITVETAAECLNLKIYPDEKVLNSIKEYFLKRSVAASIPKINEKQANIIRGAKVLENRVGTAPGQMLHFKFKDSEKKYRKTLFLLPGPPEEMKPIFEENVEPFLKSYSVGIKKNGVLHVFGIAESAVEEMIKPVMEEAVSGDSKFVEFGILASKSVIDIKFSVSGTDELFVDETISKLKLGFGNVLKDNIFGFDNDTLASVAGRLLLENKKTVSFAESCTGGNIAAAITDIPGSSLYFKSSVVTYSNESKMKLLGVKEETLTNFGAVSKETVKEMAEGVLKLSDSDYAFSVTGIAGPIGGTKKKPVGLVYIGSADKKKTESFKFNFSGTRKDIRKRTVNTALDLLRRKLIAKHSY.

This sequence belongs to the CinA family.

The sequence is that of CinA-like protein from Endomicrobium trichonymphae.